Here is a 469-residue protein sequence, read N- to C-terminus: Zinc transporter SLC39A7 (469 aa).

Residues 10–30 traverse the membrane as a helical segment; it reads WVAVGLLTWATLGLLVAELGG. Basic and acidic residues-rich tracts occupy residues 42 to 56 and 66 to 114; these read FHGH…DFHH and HTHE…EHSR. The disordered stretch occupies residues 42-121; sequence FHGHSHRHSH…HSRGGYGESG (80 aa). A Pros-methylhistidine modification is found at His66. The next 3 helical transmembrane spans lie at 138–158, 169–189, and 214–234; these read ALGA…LIPV, LQIL…LHLI, and GPIL…LVVE. A compositionally biased stretch (basic residues) spans 242 to 263; sequence GGHGHSHGHGHAHSHTHGSHGH. The disordered stretch occupies residues 242–310; the sequence is GGHGHSHGHG…VRPQNAEEEK (69 aa). Over residues 264–285 the composition is skewed to basic and acidic residues; sequence GRQECSTKEKQSSEEEEKETRG. Phosphoserine occurs at positions 275 and 276. Helical transmembrane passes span 386-406, 410-430, and 448-468; these read LTAV…GGAV, IAGG…FIYV, and SLLE…IAHL.

This sequence belongs to the ZIP transporter (TC 2.A.5) family. KE4/Catsup subfamily. Homodimer. Post-translationally, methylation at some His residue by METTL9 leads to reduced zinc-binding. In terms of processing, rapidly phosphorylated by CK2 following Zn(2+) treatment. This phosphorylation is required for efficient cytosolic Zn(2+) release.

It localises to the endoplasmic reticulum membrane. Its subcellular location is the golgi apparatus. It is found in the cis-Golgi network membrane. It catalyses the reaction Zn(2+)(in) = Zn(2+)(out). Functionally, transports Zn(2+) from the endoplasmic reticulum (ER)/Golgi apparatus to the cytosol, playing an essential role in the regulation of cytosolic zinc levels. Acts as a gatekeeper of zinc release from intracellular stores, requiring post-translational activation by phosphorylation, resulting in activation of multiple downstream pathways leading to cell growth and proliferation. Has an essential role in B cell development and is required for proper B cell receptor signaling. Plays an important role in maintaining intestinal epithelial homeostasis and skin dermis development by regulating ER function. Controls cell signaling pathways involved in glucose metabolism in skeletal muscle. Has a protective role against ER stress in different biological contexts. Mediates Zn(2+)-induced ferroptosis. The chain is Zinc transporter SLC39A7 from Pongo abelii (Sumatran orangutan).